An 801-amino-acid polypeptide reads, in one-letter code: Na(+)/H(+) antiporter subunit A1 (801 aa).

19 helical membrane-spanning segments follow: residues 1 to 21 (MSLLHIAVILPLIFVLIIPIL), 28 to 48 (IHLGWFVLPVPIVIFIYMLTL), 79 to 99 (LGLLFSLLISGIGSLVVLYSI), 117 to 137 (LFMGAMLGVVLSDNVIILYLF), 166 to 186 (LIITVFGGLSLLGGIILLAIP), 206 to 226 (PFFIFAMILIMIGAFTKSAQF), 265 to 285 (IFAASQGWIWTVTLVGLITLF), 300 to 320 (ILAFSTVSQLGMIMAMLGIGA), 337 to 357 (FTAAIFHLINHATFKGALFMI), 373 to 393 (LGGLLTIMPISFTITVITALS), 427 to 447 (LGYLFPIIGIVGSVFTFVYSI), 472 to 492 (ILMLLSPAILATLVIVFGLFP), 522 to 542 (GLTPAFLSTLVIYILGILLIV), 591 to 611 (LVIIFGALILLTFVTVFSVPF), 623 to 643 (IFEVCIVILLLSAAFLILFAK), 646 to 666 (LFNIIMLSAVGYAVSVLFIFF), 671 to 691 (LALTQFVVESISTALFLLCFY), 707 to 727 (LTNALIAGGVGLSVIIIGLIA), and 764 to 784 (MDTLFESSVLGIAGLAVYTMI).

It belongs to the CPA3 antiporters (TC 2.A.63) subunit A family. As to quaternary structure, may form a heterooligomeric complex that consists of seven subunits: mnhA1, mnhB1, mnhC1, mnhD1, mnhE1, mnhF1 and mnhG1.

The protein resides in the cell membrane. In terms of biological role, mnh complex is a Na(+)/H(+) antiporter involved in Na(+) excretion. This is Na(+)/H(+) antiporter subunit A1 (mnhA1) from Staphylococcus aureus (strain bovine RF122 / ET3-1).